The following is a 190-amino-acid chain: Large ribosomal subunit protein bL25 (190 aa).

It belongs to the bacterial ribosomal protein bL25 family. CTC subfamily. Part of the 50S ribosomal subunit; part of the 5S rRNA/L5/L18/L25 subcomplex. Contacts the 5S rRNA. Binds to the 5S rRNA independently of L5 and L18.

This is one of the proteins that binds to the 5S RNA in the ribosome where it forms part of the central protuberance. In Neisseria meningitidis serogroup A / serotype 4A (strain DSM 15465 / Z2491), this protein is Large ribosomal subunit protein bL25.